Consider the following 569-residue polypeptide: Acyl-CoA-binding domain-containing protein 5 (569 aa).

The first 31 residues, 1 to 31, serve as a signal peptide directing secretion; sequence MELFYELLLTAAASLLVAFLLARLLASAATA. Residues 415-506 form the ACB domain; sequence IEKRFGVAAA…LSEAIPGWMG (92 aa). Residues lysine 474 and tyrosine 493 each contribute to the an acyl-CoA site. A glycan (N-linked (GlcNAc...) asparagine) is linked at asparagine 508. Polar residues-rich tracts occupy residues 533-544 and 552-569; these read INQHDSQGNEDN and LTSS…IPAE. The tract at residues 533–569 is disordered; that stretch reads INQHDSQGNEDNTGMYEGHLTSSPNPEKGQSSDIPAE.

The protein belongs to the ACBP family. Highly expressed in seeds and leaves. Expressed at low levels in roots.

Its subcellular location is the endoplasmic reticulum. Its function is as follows. Binds medium- and long-chain acyl-CoA esters with high affinity. Can interact in vitro with palmitoyl-CoA and linolenoyl-CoA. Binds phosphatidic acid (PA) and phosphatidylcholine (PC) in vitro. May play a role in the biosynthesis of phospholipids. This chain is Acyl-CoA-binding domain-containing protein 5, found in Oryza sativa subsp. japonica (Rice).